A 547-amino-acid chain; its full sequence is Glucose-6-phosphate isomerase (547 aa).

The active-site Proton donor is Glu351. Residues His382 and Lys510 contribute to the active site.

This sequence belongs to the GPI family.

The protein resides in the cytoplasm. It carries out the reaction alpha-D-glucose 6-phosphate = beta-D-fructose 6-phosphate. Its pathway is carbohydrate biosynthesis; gluconeogenesis. It participates in carbohydrate degradation; glycolysis; D-glyceraldehyde 3-phosphate and glycerone phosphate from D-glucose: step 2/4. Catalyzes the reversible isomerization of glucose-6-phosphate to fructose-6-phosphate. In Saccharophagus degradans (strain 2-40 / ATCC 43961 / DSM 17024), this protein is Glucose-6-phosphate isomerase.